Here is a 138-residue protein sequence, read N- to C-terminus: 1,4-dihydroxy-2-naphthoyl-CoA hydrolase (138 aa).

The active site involves D15.

It belongs to the 4-hydroxybenzoyl-CoA thioesterase family. DHNA-CoA hydrolase subfamily.

It carries out the reaction 1,4-dihydroxy-2-naphthoyl-CoA + H2O = 1,4-dihydroxy-2-naphthoate + CoA + H(+). The protein operates within cofactor biosynthesis; phylloquinone biosynthesis. It functions in the pathway quinol/quinone metabolism; 1,4-dihydroxy-2-naphthoate biosynthesis; 1,4-dihydroxy-2-naphthoate from chorismate: step 7/7. Functionally, catalyzes the hydrolysis of 1,4-dihydroxy-2-naphthoyl-CoA (DHNA-CoA) to 1,4-dihydroxy-2-naphthoate (DHNA), a reaction involved in phylloquinone (vitamin K1) biosynthesis. This Trichodesmium erythraeum (strain IMS101) protein is 1,4-dihydroxy-2-naphthoyl-CoA hydrolase.